The following is a 445-amino-acid chain: mRNA cleavage and polyadenylation factor CLP1 (445 aa).

ATP is bound by residues Asp-33, Lys-72, and 133–138 (QTGKTS).

Belongs to the Clp1 family. Clp1 subfamily. Component of the cleavage factor IA (CF IA) complex, which is a heterohexameric complex with 2:2:1:1 stoichiometry of RNA14, RNA15, PCF11 and CLP1. It contains 2 copies of an RNA14-RNA15 dimer and 1 copy of CLP1-PCF11. The complex interacts with the cleavage factor HRB1/CF IB to form the cleavage factor I (CF I) complex, and binds to RNA. Interacts directly with PCF11. Interacts with the CPF components CFT1, PTA1, PFS2, YSH1 and SSU72.

The protein localises to the nucleus. Its function is as follows. Component of the cleavage factor IA (CF IA) complex, which is involved in the endonucleolytic cleavage during polyadenylation-dependent pre-mRNA 3'-end formation. Associates with HRB1/CF IB to form the cleavage factor I (CF I) complex. CF I is required for correct positioning of a larger protein complex, the cleavage and polyadenylation factor (CPF) complex, which contains the catalytic subunits executing mRNA cleavage and polyadenylation. CLP1 mediates interactions between CF IA and CPF factors. CLP1 is also involved in maintaining the CF IA interaction with the C-terminal domain of RNA Pol II largest subunit via PCF11, which links pre-mRNA 3'-end processing to transcription termination. In Saccharomyces cerevisiae (strain YJM789) (Baker's yeast), this protein is mRNA cleavage and polyadenylation factor CLP1.